The primary structure comprises 186 residues: Threonylcarbamoyl-AMP synthase (186 aa).

One can recognise a YrdC-like domain in the interval 5 to 186; it reads TQSINDAVKC…DAITGEILRL (182 aa).

The protein belongs to the SUA5 family. TsaC subfamily.

The protein resides in the cytoplasm. The catalysed reaction is L-threonine + hydrogencarbonate + ATP = L-threonylcarbamoyladenylate + diphosphate + H2O. Required for the formation of a threonylcarbamoyl group on adenosine at position 37 (t(6)A37) in tRNAs that read codons beginning with adenine. Catalyzes the conversion of L-threonine, HCO(3)(-)/CO(2) and ATP to give threonylcarbamoyl-AMP (TC-AMP) as the acyladenylate intermediate, with the release of diphosphate. The polypeptide is Threonylcarbamoyl-AMP synthase (Coxiella burnetii (strain RSA 493 / Nine Mile phase I)).